We begin with the raw amino-acid sequence, 459 residues long: Vacuolar amino acid transporter 5 (459 aa).

Transmembrane regions (helical) follow at residues 8-28 (GVLT…PFAF), 33-53 (LMPG…GLLL), 82-102 (VVFD…YLII), 131-151 (FLDR…PLCF), 161-181 (ASMI…YHFV), 206-226 (LTTL…FSVI), 240-260 (IPIF…GTGY), and 278-298 (SIST…AFPL). Residues 335–351 (FNSEDPQEAPTQQNNEE) are compositionally biased toward polar residues. The tract at residues 335–354 (FNSEDPQEAPTQQNNEEPNL) is disordered. 3 consecutive transmembrane segments (helical) span residues 364–384 (IITL…TSLA), 386–406 (VLAI…PGLF), and 434–454 (LSLF…IVFL).

It belongs to the amino acid/polyamine transporter 2 family.

Its subcellular location is the vacuole membrane. Its function is as follows. Probable amino acid transporter of unknown specificity. This is Vacuolar amino acid transporter 5 (AVT5) from Saccharomyces cerevisiae (strain ATCC 204508 / S288c) (Baker's yeast).